The following is a 265-amino-acid chain: Phosphonoacetaldehyde hydrolase (265 aa).

The Nucleophile role is filled by Asp10. Mg(2+) is bound by residues Asp10 and Ala12. The active-site Schiff-base intermediate with substrate is Lys51. Position 184 (Asp184) interacts with Mg(2+).

The protein belongs to the HAD-like hydrolase superfamily. PhnX family. Homodimer. Mg(2+) is required as a cofactor.

It catalyses the reaction phosphonoacetaldehyde + H2O = acetaldehyde + phosphate + H(+). In terms of biological role, involved in phosphonate degradation. The protein is Phosphonoacetaldehyde hydrolase of Latilactobacillus sakei subsp. sakei (strain 23K) (Lactobacillus sakei subsp. sakei).